Reading from the N-terminus, the 43-residue chain is Photosystem II reaction center protein Psb30 (43 aa).

Residues 16-36 traverse the membrane as a helical segment; it reads IAQLTMLAMVLIAGPVVIVLL.

Belongs to the Psb30/Ycf12 family. In terms of assembly, PSII is composed of 1 copy each of membrane proteins PsbA, PsbB, PsbC, PsbD, PsbE, PsbF, PsbH, PsbI, PsbJ, PsbK, PsbL, PsbM, PsbT, PsbX, PsbY, PsbZ, Psb30/Ycf12, peripheral proteins PsbO, CyanoQ (PsbQ), PsbU, PsbV and a large number of cofactors. It forms dimeric complexes.

It is found in the cellular thylakoid membrane. Its function is as follows. A core subunit of photosystem II (PSII), probably helps stabilize the reaction center. The sequence is that of Photosystem II reaction center protein Psb30 from Trichodesmium erythraeum (strain IMS101).